The following is a 142-amino-acid chain: Neuritin (142 aa).

An N-terminal signal peptide occupies residues 1–27; it reads MGLKLNGRYISLILAVQIAYLVQAVRA. A lipid anchor (GPI-anchor amidated glycine) is attached at G116. Residues 117-142 constitute a propeptide, removed in mature form; it reads AAGSLLPALSVLLVSLSAALATWFSF.

Belongs to the neuritin family. Component of the outer core of AMPAR complex. AMPAR complex consists of an inner core made of 4 pore-forming GluA/GRIA proteins (GRIA1, GRIA2, GRIA3 and GRIA4) and 4 major auxiliary subunits arranged in a twofold symmetry. One of the two pairs of distinct binding sites is occupied either by CNIH2, CNIH3 or CACNG2, CACNG3. The other harbors CACNG2, CACNG3, CACNG4, CACNG8 or GSG1L. This inner core of AMPAR complex is complemented by outer core constituents binding directly to the GluA/GRIA proteins at sites distinct from the interaction sites of the inner core constituents. Outer core constituents include at least PRRT1, PRRT2, CKAMP44/SHISA9, FRRS1L and NRN1. The proteins of the inner and outer core serve as a platform for other, more peripherally associated AMPAR constituents. Alone or in combination, these auxiliary subunits control the gating and pharmacology of the AMPAR complex and profoundly impact their biogenesis and protein processing. In terms of tissue distribution, expressed in the brain (at protein level).

The protein localises to the cell membrane. The protein resides in the synapse. Promotes neurite outgrowth and especially branching of neuritic processes in primary hippocampal and cortical cells. This Mus musculus (Mouse) protein is Neuritin (Nrn1).